The primary structure comprises 555 residues: Transcriptional adapter 2b (555 aa).

The segment at Phe8–Ser63 adopts a ZZ-type zinc-finger fold. 8 residues coordinate Zn(2+): Cys13, Cys16, Cys27, Cys30, Cys36, Cys39, His49, and His53. The SANT domain occupies Arg69–Thr121. A disordered region spans residues Thr318–Pro372. A compositionally biased stretch (low complexity) spans Ser339–Pro352. Positions Gly363–Pro372 are enriched in polar residues.

In terms of assembly, component of histone acetyltransferase complexes containing Gcn5 and Ada3. As to quaternary structure, can heterooligomerize with Isoform A. Component of the Spt-Ada-Gcn5 acetyltransferase (SAGA) complex consisting of Ada1, Ada2b (Isoform B), Ada3, wda, Saf6, Spt3, Spt7, Spt20, Taf9, Taf10b, Taf12, Nipped-A/Tra1, Sf3b3, Sf3b5, not/nonstop, Sgf11, Sgf29, e(y)2, Atxn7 and Gcn5. Taf5 and Taf10, which has partially redundant properties with Taf10b, may also be part of this complex. Interacts (via C-terminus) with Spt3 and Taf12; the interactions are direct. Interacts with Ada3; the interaction is probably direct. May also interact directly with Spt7 and Gcn5. Interacts with p53. Can heterooligomerize with Isoform B. Component of the Chiffon histone acetyltransferase (CHAT) complex consisting of Ada3, Sgf29, Gcn5, chif/chiffon and Ada2b (Isoform A). Interacts (via N-terminus) with Gcn5 and Ada3; the interaction is direct. Can interact directly with Spt7 in vitro but in vivo this interaction is not stable probably due to the absence of other SAGA components. Interacts with p53. In terms of tissue distribution, expressed in nurse cells of stage 10 egg chambers and transcripts are dumped into the oocyte when nurse cells degenerate at late oogenesis.

The protein localises to the nucleus. Functionally, component of several Gcn5-containing histone acetyltransferase complexes that regulate nucleosome organization; involved in acetylation of histone H3, particularly on Lys-10 (H3K9ac) and Lys-15 (H3K14ac). Regulates the transcription of a subset of genes during development; affects recruitment of RNA polymerase II. May be involved in the function of some acidic activation domains, which activate transcription at distant sites. Involved in the p53-dependent apoptosis pathway response to DNA damage by genotoxic agents. Its function is as follows. Component of the SAGA histone acetyltransferase complex, which predominantly acetylates histone H3. In terms of biological role, component of the CHAT histone acetyltransferase complex, which predominantly acetylates histone H3. This Drosophila melanogaster (Fruit fly) protein is Transcriptional adapter 2b.